The primary structure comprises 956 residues: Glycine dehydrogenase (decarboxylating) (956 aa).

Lys697 carries the post-translational modification N6-(pyridoxal phosphate)lysine.

This sequence belongs to the GcvP family. As to quaternary structure, the glycine cleavage system is composed of four proteins: P, T, L and H. It depends on pyridoxal 5'-phosphate as a cofactor.

It catalyses the reaction N(6)-[(R)-lipoyl]-L-lysyl-[glycine-cleavage complex H protein] + glycine + H(+) = N(6)-[(R)-S(8)-aminomethyldihydrolipoyl]-L-lysyl-[glycine-cleavage complex H protein] + CO2. The glycine cleavage system catalyzes the degradation of glycine. The P protein binds the alpha-amino group of glycine through its pyridoxal phosphate cofactor; CO(2) is released and the remaining methylamine moiety is then transferred to the lipoamide cofactor of the H protein. This chain is Glycine dehydrogenase (decarboxylating), found in Cereibacter sphaeroides (strain KD131 / KCTC 12085) (Rhodobacter sphaeroides).